Reading from the N-terminus, the 149-residue chain is MPYYAALGLDVGRRRIGVAGCDRLGITVQGLTTIVRRDFASDVAAISAIAKERQVELLVIGLPYSMDGSLGSQAKQTQRFATRLSKALQLPITYVDERLTSFEAEEMIKAEGRSPSRDKGAIDRKAAALILQQWLDEQREPRRFGSTQH.

The protein belongs to the YqgF nuclease family.

The protein localises to the cytoplasm. Could be a nuclease involved in processing of the 5'-end of pre-16S rRNA. The polypeptide is Putative pre-16S rRNA nuclease (Synechococcus elongatus (strain ATCC 33912 / PCC 7942 / FACHB-805) (Anacystis nidulans R2)).